Here is a 468-residue protein sequence, read N- to C-terminus: 6-phosphogluconate dehydrogenase, decarboxylating (468 aa).

NADP(+) is bound by residues 10–15 (GMAVMG), 33–35 (NRS), 74–76 (IKS), and Asn102. Residues Asn102 and 128–130 (SGG) each bind substrate. The Proton acceptor role is filled by Lys182. Position 185-186 (185-186 (HN)) interacts with substrate. Glu189 functions as the Proton donor in the catalytic mechanism. Substrate-binding residues include Tyr190, Lys259, Arg286, Arg445, and His451.

It belongs to the 6-phosphogluconate dehydrogenase family. Homodimer.

It carries out the reaction 6-phospho-D-gluconate + NADP(+) = D-ribulose 5-phosphate + CO2 + NADPH. Its pathway is carbohydrate degradation; pentose phosphate pathway; D-ribulose 5-phosphate from D-glucose 6-phosphate (oxidative stage): step 3/3. Functionally, catalyzes the oxidative decarboxylation of 6-phosphogluconate to ribulose 5-phosphate and CO(2), with concomitant reduction of NADP to NADPH. In Buchnera aphidicola subsp. Baizongia pistaciae (strain Bp), this protein is 6-phosphogluconate dehydrogenase, decarboxylating (gnd).